The sequence spans 310 residues: Transcription factor UNE12 (310 aa).

Disordered regions lie at residues 124 to 156 (HGQP…ATDP) and 229 to 253 (SSSV…WSND). The bHLH domain occupies 152–201 (QATDPHSIAERLRRERIAERIRALQELVPTVNKTDRAAMIDEIVDYVKFL).

Homodimer. Expressed constitutively in roots, leaves, stems, and flowers.

The protein localises to the nucleus. In terms of biological role, required for ovule fertilization. This Arabidopsis thaliana (Mouse-ear cress) protein is Transcription factor UNE12 (UNE12).